The following is a 733-amino-acid chain: Photosystem I P700 chlorophyll a apoprotein A2 (733 aa).

A run of 8 helical transmembrane segments spans residues 46-69 (IFASHFGHLAVIFLWTAGNLFHVA), 134-157 (LYLGSVGLLILASVLLFAGWLHLQ), 174-198 (LNHHLSGLLGVSSLAWTGHIVHVAI), 272-290 (IAHHQLAIAVVFIVAGHMY), 329-352 (LHMQLGLALACLGVATSLTAQHMY), 368-394 (AALYTHHQYIAGFLMVGAFAHGAIFFV), 416-438 (AIISHLSWASLFLGFHTLGLYIH), and 516-534 (FLVHHAIALGLHTTTLILV). [4Fe-4S] cluster is bound by residues Cys-558 and Cys-567. 2 helical membrane-spanning segments follow: residues 574 to 595 (AFYLAMFWMLNTIGWVTFYWHW) and 642 to 664 (LSVWAWMFLFGHLIWATGFMFLI). Chlorophyll a-binding residues include His-653, Met-661, and Tyr-669. Phylloquinone is bound at residue Trp-670. The helical transmembrane segment at 706 to 726 (LVGLVHFTVGYVLTYAAFVIA) threads the bilayer.

Belongs to the PsaA/PsaB family. As to quaternary structure, the PsaA/B heterodimer binds the P700 chlorophyll special pair and subsequent electron acceptors. PSI consists of a core antenna complex that captures photons, and an electron transfer chain that converts photonic excitation into a charge separation. The eukaryotic PSI reaction center is composed of at least 11 subunits. It depends on P700 is a chlorophyll a/chlorophyll a' dimer, A0 is one or more chlorophyll a, A1 is one or both phylloquinones and FX is a shared 4Fe-4S iron-sulfur center. as a cofactor.

It localises to the plastid. The protein resides in the chloroplast thylakoid membrane. It catalyses the reaction reduced [plastocyanin] + hnu + oxidized [2Fe-2S]-[ferredoxin] = oxidized [plastocyanin] + reduced [2Fe-2S]-[ferredoxin]. Functionally, psaA and PsaB bind P700, the primary electron donor of photosystem I (PSI), as well as the electron acceptors A0, A1 and FX. PSI is a plastocyanin/cytochrome c6-ferredoxin oxidoreductase, converting photonic excitation into a charge separation, which transfers an electron from the donor P700 chlorophyll pair to the spectroscopically characterized acceptors A0, A1, FX, FA and FB in turn. Oxidized P700 is reduced on the lumenal side of the thylakoid membrane by plastocyanin or cytochrome c6. This is Photosystem I P700 chlorophyll a apoprotein A2 from Phaeodactylum tricornutum (strain CCAP 1055/1).